We begin with the raw amino-acid sequence, 634 residues long: Kelch-like protein 22 (634 aa).

N-acetylalanine is present on alanine 2. A BTB domain is found at 50–117; that stretch reads FDVVLVVEGR…IYTSELELSL (68 aa). 6 Kelch repeats span residues 299-349, 350-399, 400-446, 448-493, 494-544, and 545-593; these read CVVG…VLNN, FVYL…VVGK, YIYA…TLQG, MYIT…ALLD, KLFV…VLDN, and RIYV…VLTL. Threonine 463 carries the phosphothreonine modification. Tyrosine 466 is modified (phosphotyrosine). The residue at position 475 (threonine 475) is a Phosphothreonine. Residues 600–634 form a disordered region; sequence EQPRGTPNRSQADADFASEVMSVSDWEEFDNSSED. The residue at position 605 (threonine 605) is a Phosphothreonine. Residues 624 to 634 show a composition bias toward acidic residues; that stretch reads DWEEFDNSSED.

In terms of assembly, component of the BCR(KLHL22) E3 ubiquitin ligase complex, at least composed of CUL3, KLHL22 and RBX1. Interacts with PLK1. Interacts with DEPDC5 (via DEP domain); the interaction depends on amino acid availability. Interacts with YWHAE; required for the nuclear localization of KLHL22 upon amino acid starvation.

It localises to the cytoplasm. Its subcellular location is the cytosol. The protein localises to the cytoskeleton. The protein resides in the microtubule organizing center. It is found in the centrosome. It localises to the spindle. Its subcellular location is the nucleus. The protein localises to the lysosome. It functions in the pathway protein modification; protein ubiquitination. Substrate-specific adapter of a BCR (BTB-CUL3-RBX1) E3 ubiquitin ligase complex required for chromosome alignment and localization of PLK1 at kinetochores. The BCR(KLHL22) ubiquitin ligase complex mediates monoubiquitination of PLK1, leading to PLK1 dissociation from phosphoreceptor proteins and subsequent removal from kinetochores, allowing silencing of the spindle assembly checkpoint (SAC) and chromosome segregation. Monoubiquitination of PLK1 does not lead to PLK1 degradation. The BCR(KLHL22) ubiquitin ligase complex is also responsible for the amino acid-stimulated 'Lys-48' polyubiquitination and proteasomal degradation of DEPDC5. Through the degradation of DEPDC5, releases the GATOR1 complex-mediated inhibition of the TORC1 pathway. It is therefore an amino acid-dependent activator within the amino acid-sensing branch of the TORC1 pathway, indirectly regulating different cellular processes including cell growth and autophagy. This is Kelch-like protein 22 from Rattus norvegicus (Rat).